The chain runs to 89 residues: MANIKSAKKRAKQTVVRNARNVAQRSMLRTAVKKVIKALDANDAAGAEAAFAVAQPILDRFSARGLIHKNKAARHKSRLNDRIKALKAA.

It belongs to the bacterial ribosomal protein bS20 family.

Its function is as follows. Binds directly to 16S ribosomal RNA. The protein is Small ribosomal subunit protein bS20 of Stenotrophomonas maltophilia (strain K279a).